A 387-amino-acid chain; its full sequence is Patatin-05 (387 aa).

The N-terminal stretch at 1-23 is a signal peptide; it reads MATTKSVLVLIFMILATTSSTFA. The 199-residue stretch at 32 to 230 folds into the PNPLA domain; the sequence is LSIDGGGIKG…TVADPALLSV (199 aa). Positions 36 to 41 match the GXGXXG motif; it reads GGGIKG. The GXSXG motif lies at 75–79; the sequence is GTSTG. Residue S77 is the Nucleophile of the active site. 2 N-linked (GlcNAc...) asparagine glycosylation sites follow: N115 and N203. D216 functions as the Proton acceptor in the catalytic mechanism. Residues 216 to 218 carry the DGA/G motif; it reads DGA.

The protein belongs to the patatin family. Tuber.

It localises to the vacuole. Probable lipolytic acyl hydrolase (LAH), an activity which is thought to be involved in the response of tubers to pathogens. The protein is Patatin-05 (pat1-k1) of Solanum tuberosum (Potato).